The sequence spans 253 residues: Testis-expressed protein 47 (253 aa).

As to expression, testis-specific.

This Homo sapiens (Human) protein is Testis-expressed protein 47.